The chain runs to 556 residues: Pumilio homolog 11 (556 aa).

One can recognise a PUM-HD domain in the interval 215-556 (GGSRELDGSA…RIFSKNLWKK (342 aa)). 8 Pumilio repeats span residues 238–276 (SMVDSYGSVYLMAKDQLGCRLLQKFVDEGNFVDVMIIFK), 277–313 (EVINNVIELGTDPFGNYLIQKLIEVCNEEQRTQILIR), 316–351 (SKPGLLVKISINNYGTRVVQKLIETVTTKEQISLVK), 353–388 (ALVPGFLSLFRELNGNHVILNCLKFFSPNDNKFILE), 389–424 (AATKFCIEIATTRHGCCVLQRCVSYSVGEQHEKLVD), 425–459 (EISRNSLLLAQDPFGNYLVQYIIEKKVGGVNVLFE), 460–495 (LRGNYVKLATQKFGSHVVEKCLRYYPESRSQIVNEL), and 496–531 (VSVLNFGYLLQDPYANYVIQCALSKTKGFVRASLVE).

Its subcellular location is the cytoplasm. Functionally, sequence-specific RNA-binding protein that regulates translation and mRNA stability by binding the 3'-UTR of target mRNAs. The sequence is that of Pumilio homolog 11 (APUM11) from Arabidopsis thaliana (Mouse-ear cress).